We begin with the raw amino-acid sequence, 66 residues long: Large ribosomal subunit protein bL35 (66 aa).

Residues 1 to 16 are compositionally biased toward basic residues; sequence MPKQKTHRASAKRFKR. Residues 1-21 form a disordered region; the sequence is MPKQKTHRASAKRFKRTGSGG.

This sequence belongs to the bacterial ribosomal protein bL35 family.

This is Large ribosomal subunit protein bL35 from Streptococcus sanguinis (strain SK36).